Reading from the N-terminus, the 238-residue chain is Probable transcriptional regulatory protein YeeN (238 aa).

It belongs to the TACO1 family. YeeN subfamily.

The protein resides in the cytoplasm. This is Probable transcriptional regulatory protein YeeN from Salmonella choleraesuis (strain SC-B67).